Here is a 140-residue protein sequence, read N- to C-terminus: 3-hydroxyacyl-[acyl-carrier-protein] dehydratase FabZ (140 aa).

The active site involves H47.

This sequence belongs to the thioester dehydratase family. FabZ subfamily.

The protein resides in the cytoplasm. The catalysed reaction is a (3R)-hydroxyacyl-[ACP] = a (2E)-enoyl-[ACP] + H2O. Its function is as follows. Involved in unsaturated fatty acids biosynthesis. Catalyzes the dehydration of short chain beta-hydroxyacyl-ACPs and long chain saturated and unsaturated beta-hydroxyacyl-ACPs. The chain is 3-hydroxyacyl-[acyl-carrier-protein] dehydratase FabZ from Streptococcus suis (strain 98HAH33).